The following is an 817-amino-acid chain: TPR repeat-containing protein C19B12.01 (817 aa).

2 disordered regions span residues 276–298 (DQKS…PNHP) and 386–413 (GKSP…DGEN). TPR repeat units lie at residues 459–492 (LQMW…DPYD), 521–554 (APAQ…NPLS), 555–588 (YPTW…NPED), and 625–658 (WRIW…KGKD).

This chain is TPR repeat-containing protein C19B12.01, found in Schizosaccharomyces pombe (strain 972 / ATCC 24843) (Fission yeast).